A 327-amino-acid polypeptide reads, in one-letter code: ATP-dependent (S)-NAD(P)H-hydrate dehydratase (327 aa).

The region spanning 11-313 is the YjeF C-terminal domain; it reads LLTRVKRIIP…RHVGKAYNAL (303 aa). Residues glycine 121 and 174–180 contribute to the (6S)-NADPHX site; that span reads NVIEFKR. Residues 209 to 213 and 228 to 237 each bind ATP; these read KGQSD and GGLKRCGGQG. A (6S)-NADPHX-binding site is contributed by aspartate 238.

Belongs to the NnrD/CARKD family. Requires Mg(2+) as cofactor.

The protein resides in the cytoplasm. It catalyses the reaction (6S)-NADHX + ATP = ADP + phosphate + NADH + H(+). The enzyme catalyses (6S)-NADPHX + ATP = ADP + phosphate + NADPH + H(+). In terms of biological role, catalyzes the dehydration of the S-form of NAD(P)HX at the expense of ATP, which is converted to ADP. Together with NAD(P)HX epimerase, which catalyzes the epimerization of the S- and R-forms, the enzyme allows the repair of both epimers of NAD(P)HX, a damaged form of NAD(P)H that is a result of enzymatic or heat-dependent hydration. This is ATP-dependent (S)-NAD(P)H-hydrate dehydratase from Schizosaccharomyces pombe (strain 972 / ATCC 24843) (Fission yeast).